Consider the following 393-residue polypeptide: Methylthioribose kinase (393 aa).

ATP-binding positions include N38, K53, and E107–L109. D225 is a substrate binding site. D242 to E244 lines the ATP pocket. Residue R332 participates in substrate binding.

The protein belongs to the methylthioribose kinase family. As to quaternary structure, homodimer.

It carries out the reaction 5-(methylsulfanyl)-D-ribose + ATP = 5-(methylsulfanyl)-alpha-D-ribose 1-phosphate + ADP + H(+). It functions in the pathway amino-acid biosynthesis; L-methionine biosynthesis via salvage pathway; S-methyl-5-thio-alpha-D-ribose 1-phosphate from S-methyl-5'-thioadenosine (hydrolase route): step 2/2. Catalyzes the phosphorylation of methylthioribose into methylthioribose-1-phosphate. The chain is Methylthioribose kinase from Bacillus anthracis (strain A0248).